The primary structure comprises 106 residues: Insulin-2 (106 aa).

A signal peptide spans 1–23 (MALWMQCLPLVLVLLFSTPNTEA). Intrachain disulfides connect C30-C92, C42-C105, and C91-C96. A propeptide spans 56 to 83 (DIEQAQVNGPQDNELDGMQFQPQEYQKM) (c peptide).

The protein belongs to the insulin family. In terms of assembly, heterodimer of a B chain and an A chain linked by two disulfide bonds.

The protein localises to the secreted. In terms of biological role, insulin decreases blood glucose concentration. It increases cell permeability to monosaccharides, amino acids and fatty acids. It accelerates glycolysis, the pentose phosphate cycle, and glycogen synthesis in liver. This is Insulin-2 (ins-b) from Xenopus laevis (African clawed frog).